Here is a 388-residue protein sequence, read N- to C-terminus: 3-sulfinopropanoyl-CoA desulfinase (388 aa).

Residues 121 to 124, Ser-130, and 153 to 156 contribute to the FAD site; these read ICIT and HWIT. Residue 240-241 participates in substrate binding; the sequence is YN. Residues Arg-269, Gln-336, 363–367, and Gln-384 contribute to the FAD site; that span reads GGTAQ.

The protein belongs to the acyl-CoA dehydrogenase family. As to quaternary structure, homotrimer or homotetramer. The cofactor is FAD.

It catalyses the reaction 3-sulfinopropanoyl-CoA + H2O = propanoyl-CoA + sulfite + H(+). In terms of biological role, catalyzes the conversion 3-sulfinopropanoyl-CoA (3SP-CoA) to propanoyl-CoA by abstraction of sulfite. Does not show dehydrogenase activity. The sequence is that of 3-sulfinopropanoyl-CoA desulfinase from Paraburkholderia xenovorans (strain LB400).